A 251-amino-acid chain; its full sequence is Derlin-1 (251 aa).

Serine 2 is modified (N-acetylserine). Over 2–15 (SDIGDWFRSIPTIT) the chain is Cytoplasmic. The chain crosses the membrane as a helical span at residues 16-31 (RYWFAATVAVPLVGKL). The Lumenal portion of the chain corresponds to 32–69 (GLISPAYFFLWPEAFLYRFQIWRPITATFYFPVGPGTG). The chain crosses the membrane as a helical span at residues 70–89 (FLYLVNLYFLYQYSTRLETG). Residues 90 to 94 (AFDGR) are Cytoplasmic-facing. Residues 95-115 (PADYLFMLLFNWICIVITGLA) traverse the membrane as a helical segment. Residues 116–122 (MDMQLLM) are Lumenal-facing. A helical membrane pass occupies residues 123 to 137 (IPLIMSVLYVWAQLN). Over 138–154 (RDMIVSFWFGTRFKACY) the chain is Cytoplasmic. A helical transmembrane segment spans residues 155 to 166 (LPWVILGFNYII). The Lumenal portion of the chain corresponds to 167–170 (GGSV). The chain crosses the membrane as a helical span at residues 171–189 (INELIGNLVGHLYFFLMFR). At 190–251 (YPMDLGGRNF…WGQGFRLGDQ (62 aa)) the chain is on the cytoplasmic side. Phosphoserine is present on serine 201. Threonine 202 is subject to Phosphothreonine. A Phosphoserine modification is found at serine 226. The tract at residues 229-251 (RAADQNGGGGRHNWGQGFRLGDQ) is disordered. Residues 241 to 248 (NWGQGFRL) carry the SHP-box motif.

The protein belongs to the derlin family. In terms of assembly, homotetramer. The four subunits of the tetramer are arranged in a twofold symmetry. Forms homo- and heterooligomers with DERL2 and DERL3; binding to DERL3 is poorer than that between DERL2 and DERL3. Interacts (via SHP-box motif) with VCP. Interacts with AMFR, SELENOS, SEL1L, SELENOK and SYVN1, as well as with SEL1L-SYVN1 and VCP-SELENOS protein complexes; this interaction is weaker than that observed between DERL2 and these complexes. Interacts with NGLY1 and YOD1. Does not bind to EDEM1. Interacts with DNAJB9. Interacts with RNF103. Interacts with HM13. Interacts with XBP1 isoform 1 (via luminal/ectodomain domain); the interaction obviates the need for ectodomain shedding prior HM13/SPP-mediated XBP1 isoform 1 cleavage. Interacts with the signal recognition particle/SRP and the SRP receptor; in the process of endoplasmic reticulum stress-induced pre-emptive quality control. May interact with UBXN6. Interacts with ZFAND2B; probably through VCP. Interacts with CCDC47. Interacts with C18orf32. May interact with TRAM1. Forms a complex with SVIP and VCP/p97.

Its subcellular location is the endoplasmic reticulum membrane. In terms of biological role, functional component of endoplasmic reticulum-associated degradation (ERAD) for misfolded lumenal proteins. Forms homotetramers which encircle a large channel traversing the endoplasmic reticulum (ER) membrane. This allows the retrotranslocation of misfolded proteins from the ER into the cytosol where they are ubiquitinated and degraded by the proteasome. The channel has a lateral gate within the membrane which provides direct access to membrane proteins with no need to reenter the ER lumen first. May mediate the interaction between VCP and the misfolded protein. Also involved in endoplasmic reticulum stress-induced pre-emptive quality control, a mechanism that selectively attenuates the translocation of newly synthesized proteins into the endoplasmic reticulum and reroutes them to the cytosol for proteasomal degradation. By controlling the steady-state expression of the IGF1R receptor, indirectly regulates the insulin-like growth factor receptor signaling pathway. This Bos taurus (Bovine) protein is Derlin-1.